Consider the following 418-residue polypeptide: Sterigmatocystin 8-O-methyltransferase (418 aa).

The propeptide occupies 1–41 (MTLPNKAALVGLAHTLSEQVKRYLVTADETKSPEDHKLCIE). A substrate-binding site is contributed by 170–176 (MRSAAYF). Residues 206 to 225 (LFDYYSTVDEVRGRRFDLGM) form a substrate binding region. S-adenosyl-L-methionine-binding positions include 254–255 (GG), D277, 297–298 (DI), and R313. H317 (proton acceptor) is an active-site residue.

Belongs to the class I-like SAM-binding methyltransferase superfamily. Cation-independent O-methyltransferase family. COMT subfamily.

The catalysed reaction is sterigmatocystin + S-adenosyl-L-methionine = 8-O-methylsterigmatocystin + S-adenosyl-L-homocysteine + H(+). It catalyses the reaction dihydrosterigmatocystin + S-adenosyl-L-methionine = 8-O-methyldihydrosterigmatocystin + S-adenosyl-L-homocysteine + H(+). It participates in mycotoxin biosynthesis; aflatoxin biosynthesis. Involved in the conversion of sterigmatocystin to O-methylsterigmatocystin (OMST) and dihydrosterigmatocystin to dihydro-o-methylsterigmatocystin in the aflatoxin biosynthesis pathway. The chain is Sterigmatocystin 8-O-methyltransferase (omtA) from Aspergillus flavus (strain ATCC 200026 / FGSC A1120 / IAM 13836 / NRRL 3357 / JCM 12722 / SRRC 167).